We begin with the raw amino-acid sequence, 979 residues long: Calsyntenin-1 (979 aa).

A signal peptide spans 1–28 (MLRRPAPALAPAVRLLLAGLLCGGGVWA). Topologically, residues 29–859 (ARVNKHKPWL…PHPFAVVPST (831 aa)) are extracellular. Cadherin domains follow at residues 38-164 (LEPT…APVF) and 165-265 (KEKS…SPGW). 3 N-linked (GlcNAc...) asparagine glycosylation sites follow: asparagine 346, asparagine 366, and asparagine 515. The chain crosses the membrane as a helical span at residues 860–880 (ATVVIVVCVSFLVFMIILGVF). Topologically, residues 881-979 (RIRAAHQRTM…LEWDDSTLSY (99 aa)) are cytoplasmic. Positions 915–979 (METYEDQHSS…LEWDDSTLSY (65 aa)) are disordered. A compositionally biased stretch (acidic residues) spans 925 to 959 (EEEEEEEEEEESEDGEEEEDITSAESESSEEEEGG).

This sequence belongs to the calsyntenin family. As to quaternary structure, directly interacts with APBA2. Forms a tripartite complex with APBA2 and APP. The CTF1 chain interacts with PSEN1. Interacts with KLC1 and APBB1. Interacts with APBB1; this interaction stabilizes AlcICD metabolism. In terms of assembly, interacts with PSEN1. Post-translationally, proteolytically processed under normal cellular conditions. A primary zeta-cleavage generates a large extracellular (soluble) N-terminal domain (sAlc) and a short C-terminal transmembrane fragment (CTF1). A secondary cleavage catalyzed by presenilin gamma-secretase within the transmembrane domain releases the beta-Alc-alpha chain in the extracellular milieu and produces an intracellular fragment (AlcICD). Beta-Alc-alpha secretion is largely dependent upon PSEN1 and PSEN2. This processing is strongly suppressed in the tripartite complex formed with APBA2 and APP, which seems to prevent the association with PSEN1. As to expression, highly expressed in the brain (at protein level), with over 90% of the neurons expressing detectable amounts. In the brain, relatively high levels in the cerebral cortex, striatum, hippocampus and thalamus. Moderate levels in the cerebellum. Low levels in the olfactory bulb, midbrain and pons (at protein level). Not detected in Purkinje cells. Expressed at low levels in the lung (at protein level). At the mRNA level, weakly detected in the kidney, lung, skeletal muscle, heart and testis. Not expressed in the sciatic nerve fiber.

It localises to the postsynaptic cell membrane. It is found in the endoplasmic reticulum membrane. Its subcellular location is the golgi apparatus membrane. The protein localises to the cell projection. The protein resides in the neuron projection. It localises to the vesicle. It is found in the nucleus. Its function is as follows. Postsynaptic adhesion molecule that binds to presynaptic neurexins to mediate both excitatory and inhibitory synapse formation. Promotes synapse development by acting as a cell adhesion molecule at the postsynaptic membrane, which associates with neurexin-alpha at the presynaptic membrane. Also functions as a cargo in axonal anterograde transport by acting as a molecular adapter that promotes KLC1 association with vesicles. Complex formation with APBA2 and APP, stabilizes APP metabolism and enhances APBA2-mediated suppression of beta-APP40 secretion, due to the retardation of intracellular APP maturation. In terms of biological role, as intracellular fragment AlcICD, suppresses APBB1-dependent transactivation stimulated by APP C-terminal intracellular fragment (AICD), most probably by competing with AICD for APBB1-binding. In complex with APBA2 and C99, a C-terminal APP fragment, abolishes C99 interaction with PSEN1 and thus APP C99 cleavage by gamma-secretase, most probably through stabilization of the direct interaction between APBA2 and APP. This Mus musculus (Mouse) protein is Calsyntenin-1.